Reading from the N-terminus, the 248-residue chain is Transmembrane protein 223 (248 aa).

3 consecutive transmembrane segments (helical) span residues 46-68, 84-104, and 140-160; these read IFRPLVFPVRVASAFTFTSAAVA, LLAIFCGGQFLFWAYLGHFAF, and YGFTSGCLIIGGGILALALLF.

Belongs to the TMEM223 family.

It localises to the mitochondrion inner membrane. Functionally, mitochondrial ribosome-associated protein involved in the first steps of cytochrome c oxidase complex (complex IV) biogenesis. Stimulates the translation of MT-CO1 mRNA and is a constituent of early MT-CO1 assembly intermediates. The polypeptide is Transmembrane protein 223 (Danio rerio (Zebrafish)).